The primary structure comprises 361 residues: MTRAFNFSAGPATLPESVLRQAQEEMVEWNGVGASIVEISHRSADFMAVAAAAEADLRTLLSIPDDYAVLFTSGGATTIQALLPLNFAAPGQAVDYVVSGHWGKTAIKQATPYVDVRVAADGQPGGYVDIPPVASWTLSPHAAYVHITANETIHGVEFRDTPDVGTLPLFADFSSSIASEPLDIRRYGLIYAGAQKNLGPVGISVVIVRRELLERAGQPRADIFNYASHVARDSMLNTPPTWNWYLLGLTVKWMLEQGGVAAFAQCNAEKAALVYGAIDGSGGFYRNQVMPTVRSRMNIPFFLGDEQLDALFVSESKAAGLLALKGHKAVGGIRASLYNAMPVAGAQALVAFMHDFQQRHG.

Arginine 42 lines the L-glutamate pocket. Pyridoxal 5'-phosphate contacts are provided by residues 76-77 (AT), tryptophan 102, threonine 152, aspartate 172, and glutamine 195. An N6-(pyridoxal phosphate)lysine modification is found at lysine 196. 237–238 (NT) is a binding site for pyridoxal 5'-phosphate.

It belongs to the class-V pyridoxal-phosphate-dependent aminotransferase family. SerC subfamily. Homodimer. It depends on pyridoxal 5'-phosphate as a cofactor.

It is found in the cytoplasm. It carries out the reaction O-phospho-L-serine + 2-oxoglutarate = 3-phosphooxypyruvate + L-glutamate. The catalysed reaction is 4-(phosphooxy)-L-threonine + 2-oxoglutarate = (R)-3-hydroxy-2-oxo-4-phosphooxybutanoate + L-glutamate. Its pathway is amino-acid biosynthesis; L-serine biosynthesis; L-serine from 3-phospho-D-glycerate: step 2/3. The protein operates within cofactor biosynthesis; pyridoxine 5'-phosphate biosynthesis; pyridoxine 5'-phosphate from D-erythrose 4-phosphate: step 3/5. In terms of biological role, catalyzes the reversible conversion of 3-phosphohydroxypyruvate to phosphoserine and of 3-hydroxy-2-oxo-4-phosphonooxybutanoate to phosphohydroxythreonine. This is Phosphoserine aminotransferase from Xanthomonas campestris pv. campestris (strain B100).